Reading from the N-terminus, the 246-residue chain is Homeobox protein Hox-B4a (246 aa).

A disordered region spans residues 23–125 (YSQSDYLPSH…SQNTSTVSSR (103 aa)). Composition is skewed to polar residues over residues 39 to 48 (AQRQDPSFQH) and 112 to 123 (QTPTSQNTSTVS). Positions 130–135 (VYPWMK) match the Antp-type hexapeptide motif. Residues 151-210 (PKRSRTAYTRQQVLELEKEFHYNRYLTRRRRVEIAHTLCLSERQIKIWFQNRRMKWKKDH) constitute a DNA-binding region (homeobox). Residues 210 to 246 (HKLPNTKIRSNSASTNSSGCPTLCSNQSRASGPPPSL) form a disordered region. A compositionally biased stretch (polar residues) spans 216 to 239 (KIRSNSASTNSSGCPTLCSNQSRA).

The protein belongs to the Antp homeobox family. Deformed subfamily.

It is found in the nucleus. Sequence-specific transcription factor which is part of a developmental regulatory system that provides cells with specific positional identities on the anterior-posterior axis. This is Homeobox protein Hox-B4a (hoxb4a) from Danio rerio (Zebrafish).